The primary structure comprises 401 residues: Formate-dependent phosphoribosylglycinamide formyltransferase (401 aa).

N(1)-(5-phospho-beta-D-ribosyl)glycinamide contacts are provided by residues 22–23 (EL) and Glu-82. ATP-binding positions include Arg-115, Lys-157, 162 to 167 (SSGKGQ), 197 to 200 (EGFI), and Glu-205. Positions 120 to 315 (RLAAETLGLP…EFELHARAIL (196 aa)) constitute an ATP-grasp domain. Glu-274 and Glu-286 together coordinate Mg(2+). N(1)-(5-phospho-beta-D-ribosyl)glycinamide-binding positions include Asp-293, Lys-362, and 369–370 (RR).

Belongs to the PurK/PurT family. As to quaternary structure, homodimer.

The enzyme catalyses N(1)-(5-phospho-beta-D-ribosyl)glycinamide + formate + ATP = N(2)-formyl-N(1)-(5-phospho-beta-D-ribosyl)glycinamide + ADP + phosphate + H(+). It participates in purine metabolism; IMP biosynthesis via de novo pathway; N(2)-formyl-N(1)-(5-phospho-D-ribosyl)glycinamide from N(1)-(5-phospho-D-ribosyl)glycinamide (formate route): step 1/1. In terms of biological role, involved in the de novo purine biosynthesis. Catalyzes the transfer of formate to 5-phospho-ribosyl-glycinamide (GAR), producing 5-phospho-ribosyl-N-formylglycinamide (FGAR). Formate is provided by PurU via hydrolysis of 10-formyl-tetrahydrofolate. The protein is Formate-dependent phosphoribosylglycinamide formyltransferase of Cupriavidus pinatubonensis (strain JMP 134 / LMG 1197) (Cupriavidus necator (strain JMP 134)).